An 86-amino-acid polypeptide reads, in one-letter code: UPF0335 protein BruAb1_1737 (86 aa).

It belongs to the UPF0335 family.

This chain is UPF0335 protein BruAb1_1737, found in Brucella abortus biovar 1 (strain 9-941).